Consider the following 178-residue polypeptide: ATP-dependent protease subunit HslV (178 aa).

Threonine 7 is an active-site residue. Residues glycine 162, cysteine 165, and threonine 168 each contribute to the Na(+) site.

Belongs to the peptidase T1B family. HslV subfamily. In terms of assembly, a double ring-shaped homohexamer of HslV is capped on each side by a ring-shaped HslU homohexamer. The assembly of the HslU/HslV complex is dependent on binding of ATP.

The protein resides in the cytoplasm. The catalysed reaction is ATP-dependent cleavage of peptide bonds with broad specificity.. With respect to regulation, allosterically activated by HslU binding. Functionally, protease subunit of a proteasome-like degradation complex believed to be a general protein degrading machinery. The sequence is that of ATP-dependent protease subunit HslV from Cupriavidus taiwanensis (strain DSM 17343 / BCRC 17206 / CCUG 44338 / CIP 107171 / LMG 19424 / R1) (Ralstonia taiwanensis (strain LMG 19424)).